The primary structure comprises 219 residues: 7-cyano-7-deazaguanine synthase (219 aa).

10 to 20 is an ATP binding site; that stretch reads FSGGQDSTTCL. Residues cysteine 188, cysteine 197, cysteine 200, and cysteine 203 each contribute to the Zn(2+) site.

It belongs to the QueC family. Homodimer. Zn(2+) serves as cofactor.

The enzyme catalyses 7-carboxy-7-deazaguanine + NH4(+) + ATP = 7-cyano-7-deazaguanine + ADP + phosphate + H2O + H(+). Its pathway is purine metabolism; 7-cyano-7-deazaguanine biosynthesis. In terms of biological role, catalyzes the ATP-dependent conversion of 7-carboxy-7-deazaguanine (CDG) to 7-cyano-7-deazaguanine (preQ(0)). The sequence is that of 7-cyano-7-deazaguanine synthase from Clostridium botulinum (strain Langeland / NCTC 10281 / Type F).